A 310-amino-acid chain; its full sequence is Glutaminase (310 aa).

7 residues coordinate substrate: Ser-66, Asn-117, Glu-161, Asn-168, Tyr-192, Tyr-244, and Val-262.

This sequence belongs to the glutaminase family. As to quaternary structure, homotetramer.

The catalysed reaction is L-glutamine + H2O = L-glutamate + NH4(+). This Shigella boydii serotype 4 (strain Sb227) protein is Glutaminase.